The primary structure comprises 301 residues: Inosose dehydratase (301 aa).

Belongs to the IolE/MocC family. Glutathione serves as cofactor. Co(2+) is required as a cofactor. Requires Mn(2+) as cofactor.

It carries out the reaction scyllo-inosose = 3D-3,5/4-trihydroxycyclohexane-1,2-dione + H2O. It participates in polyol metabolism; myo-inositol degradation into acetyl-CoA; acetyl-CoA from myo-inositol: step 2/7. Catalyzes the dehydration of inosose (2-keto-myo-inositol, 2KMI or 2,4,6/3,5-pentahydroxycyclohexanone) to 3D-(3,5/4)-trihydroxycyclohexane-1,2-dione (D-2,3-diketo-4-deoxy-epi-inositol). This is Inosose dehydratase from Lacticaseibacillus casei (strain BL23) (Lactobacillus casei).